Here is a 543-residue protein sequence, read N- to C-terminus: Glucose-6-phosphate isomerase (543 aa).

The active-site Proton donor is the glutamate 353. Catalysis depends on residues histidine 384 and lysine 504.

Belongs to the GPI family.

The protein localises to the cytoplasm. It catalyses the reaction alpha-D-glucose 6-phosphate = beta-D-fructose 6-phosphate. It functions in the pathway carbohydrate biosynthesis; gluconeogenesis. It participates in carbohydrate degradation; glycolysis; D-glyceraldehyde 3-phosphate and glycerone phosphate from D-glucose: step 2/4. Its function is as follows. Catalyzes the reversible isomerization of glucose-6-phosphate to fructose-6-phosphate. The protein is Glucose-6-phosphate isomerase of Roseiflexus castenholzii (strain DSM 13941 / HLO8).